The following is a 369-amino-acid chain: uncharacterized protein (369 aa).

This is an uncharacterized protein from Caenorhabditis elegans.